A 61-amino-acid chain; its full sequence is Transmembrane protein 300R (61 aa).

The next 2 helical transmembrane spans lie at 5-25 and 35-55; these read FLDLYMILSVLAGVIGIFYLT and SLSYYMTLSVVTGILALIYLQ.

The protein resides in the membrane. The polypeptide is Transmembrane protein 300R (Invertebrate iridescent virus 6 (IIV-6)).